We begin with the raw amino-acid sequence, 368 residues long: D-alanine--D-alanine ligase (368 aa).

The 208-residue stretch at 151-358 (KKLLAAEGLP…YRTLISTLVD (208 aa)) folds into the ATP-grasp domain. An ATP-binding site is contributed by 179-234 (KAELGLPVFVKPARGGSSIGITRVSNWDGLDGAIAHARLHDPKVIVEGAIIGREVE). Residues D313, E325, and N327 each coordinate Mg(2+).

This sequence belongs to the D-alanine--D-alanine ligase family. Mg(2+) is required as a cofactor. The cofactor is Mn(2+).

Its subcellular location is the cytoplasm. The enzyme catalyses 2 D-alanine + ATP = D-alanyl-D-alanine + ADP + phosphate + H(+). Its pathway is cell wall biogenesis; peptidoglycan biosynthesis. Its function is as follows. Cell wall formation. The chain is D-alanine--D-alanine ligase from Rhodococcus erythropolis (strain PR4 / NBRC 100887).